The sequence spans 328 residues: Zinc chaperone YeiR (328 aa).

9 to 17 (GFLGSGKTT) provides a ligand contact to GTP. The CXCC motif signature appears at 63 to 66 (CMCC). Asp-155 provides a ligand contact to GTP. The CobW C-terminal domain maps to 241–321 (CGWIFDADTV…WNALQSALLK (81 aa)).

It belongs to the SIMIBI class G3E GTPase family. ZNG1 subfamily. In terms of assembly, oligomerizes in the presence of Zn(2+).

The enzyme catalyses GTP + H2O = GDP + phosphate + H(+). GTPase activity is enhanced by Zn(2+) binding. Zinc chaperone that directly transfers zinc cofactor to target proteins, thereby activating them. Zinc is transferred from the CXCC motif in the GTPase domain to the zinc binding site in target proteins in a process requiring GTP hydrolysis. The sequence is that of Zinc chaperone YeiR (yeiR) from Escherichia coli (strain K12).